Consider the following 241-residue polypeptide: U2 small nuclear ribonucleoprotein B'' (241 aa).

The region spanning 12–91 (QTLYVNNLYE…RPMKIQYCKS (80 aa)) is the RRM 1 domain. Residues 99–126 (LDGTYMEKKREREENDKKGSNKKQDRKS) are compositionally biased toward basic and acidic residues. The interval 99–169 (LDGTYMEKKR…PRDDPPNKTL (71 aa)) is disordered. The span at 129-152 (QQQQQQKRPGAPTSTTSTTSPTTS) shows a compositional bias: low complexity. The RRM 2 domain occupies 167-241 (KTLFVENLPD…KPMVVSFAAQ (75 aa)).

This sequence belongs to the RRM U1 A/B'' family. Identified in the spliceosome B complex. Identified in the spliceosome C complex.

It is found in the nucleus. Functionally, involved in pre-mRNA splicing as component of the spliceosome. Associated with sn-RNP U2, where it contributes to the binding of stem loop IV of U2 snRNA. In Dictyostelium discoideum (Social amoeba), this protein is U2 small nuclear ribonucleoprotein B'' (snrpb2).